We begin with the raw amino-acid sequence, 417 residues long: Putative plant UBX domain-containing protein 14 (417 aa).

The UBX domain occupies 335–415 (DRSVVCSICV…GIANSMISVT (81 aa)).

This is Putative plant UBX domain-containing protein 14 from Arabidopsis thaliana (Mouse-ear cress).